The following is a 273-amino-acid chain: Bis(5'-nucleosyl)-tetraphosphatase, symmetrical (273 aa).

The protein belongs to the Ap4A hydrolase family.

It catalyses the reaction P(1),P(4)-bis(5'-adenosyl) tetraphosphate + H2O = 2 ADP + 2 H(+). Hydrolyzes diadenosine 5',5'''-P1,P4-tetraphosphate to yield ADP. This is Bis(5'-nucleosyl)-tetraphosphatase, symmetrical (apaH) from Buchnera aphidicola subsp. Schizaphis graminum (strain Sg).